Consider the following 158-residue polypeptide: 2-C-methyl-D-erythritol 2,4-cyclodiphosphate synthase (158 aa).

2 residues coordinate a divalent metal cation: aspartate 9 and histidine 11. 4-CDP-2-C-methyl-D-erythritol 2-phosphate contacts are provided by residues 9–11 (DVH) and 35–36 (HS). Histidine 43 contacts a divalent metal cation. 4-CDP-2-C-methyl-D-erythritol 2-phosphate is bound by residues 57–59 (DIG) and arginine 143.

It belongs to the IspF family. As to quaternary structure, homotrimer. A divalent metal cation serves as cofactor.

The enzyme catalyses 4-CDP-2-C-methyl-D-erythritol 2-phosphate = 2-C-methyl-D-erythritol 2,4-cyclic diphosphate + CMP. Its pathway is isoprenoid biosynthesis; isopentenyl diphosphate biosynthesis via DXP pathway; isopentenyl diphosphate from 1-deoxy-D-xylulose 5-phosphate: step 4/6. In terms of biological role, involved in the biosynthesis of isopentenyl diphosphate (IPP) and dimethylallyl diphosphate (DMAPP), two major building blocks of isoprenoid compounds. Catalyzes the conversion of 4-diphosphocytidyl-2-C-methyl-D-erythritol 2-phosphate (CDP-ME2P) to 2-C-methyl-D-erythritol 2,4-cyclodiphosphate (ME-CPP) with a corresponding release of cytidine 5-monophosphate (CMP). This Chromobacterium violaceum (strain ATCC 12472 / DSM 30191 / JCM 1249 / CCUG 213 / NBRC 12614 / NCIMB 9131 / NCTC 9757 / MK) protein is 2-C-methyl-D-erythritol 2,4-cyclodiphosphate synthase.